The sequence spans 601 residues: Elongation factor 4 (601 aa).

The tr-type G domain maps to 5–187 (IRKKNFCIIA…AICKHVPSPR (183 aa)). GTP is bound by residues 17 to 22 (DHGKST) and 134 to 137 (NKID).

It belongs to the TRAFAC class translation factor GTPase superfamily. Classic translation factor GTPase family. LepA subfamily.

The protein localises to the cell inner membrane. It catalyses the reaction GTP + H2O = GDP + phosphate + H(+). Its function is as follows. Required for accurate and efficient protein synthesis under certain stress conditions. May act as a fidelity factor of the translation reaction, by catalyzing a one-codon backward translocation of tRNAs on improperly translocated ribosomes. Back-translocation proceeds from a post-translocation (POST) complex to a pre-translocation (PRE) complex, thus giving elongation factor G a second chance to translocate the tRNAs correctly. Binds to ribosomes in a GTP-dependent manner. The sequence is that of Elongation factor 4 from Borrelia garinii subsp. bavariensis (strain ATCC BAA-2496 / DSM 23469 / PBi) (Borreliella bavariensis).